A 383-amino-acid chain; its full sequence is Protein delta homolog 2 (383 aa).

The first 26 residues, 1–26, serve as a signal peptide directing secretion; sequence MPSGCRCLHLVCLLCILAAPVKPVRA. 4 EGF-like domains span residues 27-58, 62-89, 91-129, and 131-172; these read DDCSSHCDLAHGCCAPDGSCRCDPGWEGLHCE, RMPGCQHGTCHQPWQCICHSGWAGKFCD, DEHVCTTQSPCRNGGQCIYDGGGEYHCVCPPGFHGRDCE, and KEGP…AHCE. Residues 27–306 are Extracellular-facing; that stretch reads DDCSSHCDLA…RQEAGLGKSS (280 aa). Cystine bridges form between C29/C40, C33/C46, C48/C57, C66/C71, C79/C88, C95/C107, C101/C117, C119/C128, C135/C148, C142/C160, C162/C171, C178/C189, C183/C198, C200/C209, C216/C227, C221/C236, and C238/C247. Residue N157 is glycosylated (N-linked (GlcNAc...) asparagine). The EGF-like 5; calcium-binding domain maps to 174 to 210; that stretch reads NVDDCLMRPCANGATCLDGINRFSCLCPEGFAGRFCT. The 37-residue stretch at 212–248 folds into the EGF-like 6; calcium-binding domain; that stretch reads NLDDCASRPCQRGARCRDRVHDFDCLCPSGYGGKTCE. The chain crosses the membrane as a helical span at residues 307–327; the sequence is LVAVVVFGAVTATLVLSTVLL. The Cytoplasmic portion of the chain corresponds to 328 to 383; the sequence is TLRAWRRGVCPPGPCCYPAPHYAPARQDQECQVSMLPAGLPLPPDLPPEPGKTTAL.

The protein localises to the membrane. Functionally, regulates adipogenesis. This chain is Protein delta homolog 2 (DLK2), found in Sus scrofa (Pig).